Consider the following 281-residue polypeptide: Ribosomal RNA small subunit methyltransferase A (281 aa).

The S-adenosyl-L-methionine site is built by Asn21, Leu23, Gly48, Glu69, Asp92, and Asn113.

The protein belongs to the class I-like SAM-binding methyltransferase superfamily. rRNA adenine N(6)-methyltransferase family. RsmA subfamily.

It is found in the cytoplasm. The enzyme catalyses adenosine(1518)/adenosine(1519) in 16S rRNA + 4 S-adenosyl-L-methionine = N(6)-dimethyladenosine(1518)/N(6)-dimethyladenosine(1519) in 16S rRNA + 4 S-adenosyl-L-homocysteine + 4 H(+). Functionally, specifically dimethylates two adjacent adenosines (A1518 and A1519) in the loop of a conserved hairpin near the 3'-end of 16S rRNA in the 30S particle. May play a critical role in biogenesis of 30S subunits. This chain is Ribosomal RNA small subunit methyltransferase A, found in Ralstonia nicotianae (strain ATCC BAA-1114 / GMI1000) (Ralstonia solanacearum).